Consider the following 315-residue polypeptide: uncharacterized protein (315 aa).

The segment covering 296 to 308 (RSKLRKGTHKRTP) has biased composition (basic residues). A disordered region spans residues 296-315 (RSKLRKGTHKRTPGRAGDAD).

Belongs to the metallo-dependent hydrolases superfamily. Peptidase M19 family.

This is an uncharacterized protein from Acinetobacter calcoaceticus.